The sequence spans 391 residues: ATP phosphoribosyltransferase regulatory subunit (391 aa).

It belongs to the class-II aminoacyl-tRNA synthetase family. HisZ subfamily. In terms of assembly, heteromultimer composed of HisG and HisZ subunits.

Its subcellular location is the cytoplasm. It functions in the pathway amino-acid biosynthesis; L-histidine biosynthesis; L-histidine from 5-phospho-alpha-D-ribose 1-diphosphate: step 1/9. In terms of biological role, required for the first step of histidine biosynthesis. May allow the feedback regulation of ATP phosphoribosyltransferase activity by histidine. This chain is ATP phosphoribosyltransferase regulatory subunit, found in Prochlorococcus marinus (strain NATL2A).